We begin with the raw amino-acid sequence, 438 residues long: Methionine aminopeptidase 2 (438 aa).

A disordered region spans residues 1–89; that stretch reads MAAQAAPAEE…LFPNKQYPKG (89 aa). Over residues 10–20 the composition is skewed to basic and acidic residues; that stretch reads ELSKLSVEETK. Basic residues predominate over residues 51-65; sequence AKKKKKRKPRKKKKA. Residue histidine 191 coordinates substrate. The a divalent metal cation site is built by aspartate 211, aspartate 222, and histidine 291. Residue histidine 299 participates in substrate binding. Residues glutamate 324 and glutamate 419 each coordinate a divalent metal cation.

The protein belongs to the peptidase M24A family. Methionine aminopeptidase eukaryotic type 2 subfamily. Co(2+) serves as cofactor. The cofactor is Zn(2+). Mn(2+) is required as a cofactor. Requires Fe(2+) as cofactor.

The protein localises to the cytoplasm. It catalyses the reaction Release of N-terminal amino acids, preferentially methionine, from peptides and arylamides.. Cotranslationally removes the N-terminal methionine from nascent proteins. The N-terminal methionine is often cleaved when the second residue in the primary sequence is small and uncharged (Met-Ala-, Cys, Gly, Pro, Ser, Thr, or Val). The chain is Methionine aminopeptidase 2 from Sordaria macrospora (strain ATCC MYA-333 / DSM 997 / K(L3346) / K-hell).